A 211-amino-acid polypeptide reads, in one-letter code: Dual specificity phosphatase 29 (211 aa).

The Tyrosine-protein phosphatase domain maps to 47–192 (HVNEVWPGIY…LRTLDIQLAI (146 aa)). Residue 136–143 (HCAMGRSR) participates in substrate binding. Cys-137 acts as the Phosphocysteine intermediate in catalysis.

This sequence belongs to the protein-tyrosine phosphatase family. Non-receptor class dual specificity subfamily.

It localises to the cytoplasm. The protein resides in the nucleus. It catalyses the reaction O-phospho-L-tyrosyl-[protein] + H2O = L-tyrosyl-[protein] + phosphate. The enzyme catalyses O-phospho-L-seryl-[protein] + H2O = L-seryl-[protein] + phosphate. The catalysed reaction is O-phospho-L-threonyl-[protein] + H2O = L-threonyl-[protein] + phosphate. Its function is as follows. Dual specificity phosphatase able to dephosphorylate phosphotyrosine, phosphoserine and phosphothreonine residues within the same substrate, with a preference for phosphotyrosine as a substrate. Involved in the modulation of AMPK and MAPK1/2 signaling pathways. The sequence is that of Dual specificity phosphatase 29 (dusp29) from Callorhinchus milii (Ghost shark).